We begin with the raw amino-acid sequence, 203 residues long: 22.3 kDa class VI heat shock protein (203 aa).

Residues 86–203 form the sHSP domain; that stretch reads ALRRGARTTV…DAHQAAAATA (118 aa).

It belongs to the small heat shock protein (HSP20) family. In terms of assembly, may form oligomeric structures.

It localises to the cytoplasm. The chain is 22.3 kDa class VI heat shock protein (HSP22.3) from Oryza sativa subsp. japonica (Rice).